Reading from the N-terminus, the 122-residue chain is MIQMQSTLDVACNSGARRVQCIKVLGGSHRRYAGIGDIIKVSVKEAIPRAKAKKGDVYNAVVVRTKKGVRRPDGSVIRFDRNAAVLLNNNLQPIGTRIFGPVTRELRSEQFMKIVSLAPEVL.

It belongs to the universal ribosomal protein uL14 family. As to quaternary structure, part of the 50S ribosomal subunit. Forms a cluster with proteins L3 and L19. In the 70S ribosome, L14 and L19 interact and together make contacts with the 16S rRNA in bridges B5 and B8.

Functionally, binds to 23S rRNA. Forms part of two intersubunit bridges in the 70S ribosome. In Shewanella sp. (strain ANA-3), this protein is Large ribosomal subunit protein uL14.